The following is a 237-amino-acid chain: LexA repressor (237 aa).

The segment at residues 26-46 is a DNA-binding region (H-T-H motif); that stretch reads FDEMKEALDLRSKSGIHRLIT. The segment at 84 to 110 is disordered; it reads GFSPSVIEGGAQPKPSSRDLAPARSSG. Residues Ser-158 and Lys-196 each act as for autocatalytic cleavage activity in the active site.

This sequence belongs to the peptidase S24 family. In terms of assembly, homodimer.

It carries out the reaction Hydrolysis of Ala-|-Gly bond in repressor LexA.. In terms of biological role, represses a number of genes involved in the response to DNA damage (SOS response), including recA and lexA. In the presence of single-stranded DNA, RecA interacts with LexA causing an autocatalytic cleavage which disrupts the DNA-binding part of LexA, leading to derepression of the SOS regulon and eventually DNA repair. The chain is LexA repressor from Parvibaculum lavamentivorans (strain DS-1 / DSM 13023 / NCIMB 13966).